The primary structure comprises 178 residues: ATP-dependent protease subunit HslV (178 aa).

The active site involves Thr7. Residues Gly162, Cys165, and Thr168 each contribute to the Na(+) site.

This sequence belongs to the peptidase T1B family. HslV subfamily. As to quaternary structure, a double ring-shaped homohexamer of HslV is capped on each side by a ring-shaped HslU homohexamer. The assembly of the HslU/HslV complex is dependent on binding of ATP.

It localises to the cytoplasm. It catalyses the reaction ATP-dependent cleavage of peptide bonds with broad specificity.. Its activity is regulated as follows. Allosterically activated by HslU binding. Functionally, protease subunit of a proteasome-like degradation complex believed to be a general protein degrading machinery. The polypeptide is ATP-dependent protease subunit HslV (Burkholderia ambifaria (strain MC40-6)).